Reading from the N-terminus, the 364-residue chain is 3-isopropylmalate dehydrogenase (364 aa).

76 to 89 provides a ligand contact to NAD(+); that stretch reads GPKWDGNAPEKRPE. R96, R106, R134, and D223 together coordinate substrate. Mg(2+) is bound by residues D223, D247, and D251. Position 281 to 293 (281 to 293) interacts with NAD(+); it reads GSAPDIAGTGAAN.

The protein belongs to the isocitrate and isopropylmalate dehydrogenases family. LeuB type 1 subfamily. As to quaternary structure, homodimer. Mg(2+) is required as a cofactor. Requires Mn(2+) as cofactor.

The protein resides in the cytoplasm. It carries out the reaction (2R,3S)-3-isopropylmalate + NAD(+) = 4-methyl-2-oxopentanoate + CO2 + NADH. Its pathway is amino-acid biosynthesis; L-leucine biosynthesis; L-leucine from 3-methyl-2-oxobutanoate: step 3/4. Functionally, catalyzes the oxidation of 3-carboxy-2-hydroxy-4-methylpentanoate (3-isopropylmalate) to 3-carboxy-4-methyl-2-oxopentanoate. The product decarboxylates to 4-methyl-2 oxopentanoate. This is 3-isopropylmalate dehydrogenase from Shouchella clausii (strain KSM-K16) (Alkalihalobacillus clausii).